Reading from the N-terminus, the 631-residue chain is Serine/threonine-protein kinase PLK3 (631 aa).

The tract at residues 1–59 (MEPAAGFLSPRPFPRAAVPSAPPAGPGPPANASPRSEPEVLAGPRAPDPPGRLITDPLS) is disordered. The segment covering 20 to 31 (SAPPAGPGPPAN) has biased composition (pro residues). Residues 63–315 (YTKGRLLGKG…IEQILRHDFF (253 aa)) form the Protein kinase domain. ATP contacts are provided by residues 69–77 (LGKGGFARC) and K92. D186 acts as the Proton acceptor in catalysis. 2 POLO box domains span residues 448–526 (WVSK…YMEQ) and 547–630 (LLLQ…DQSP).

It belongs to the protein kinase superfamily. Ser/Thr protein kinase family. CDC5/Polo subfamily. In terms of assembly, interacts (via the POLO-box domain) with CIB1; leading to inhibit PLK3 kinase activity. Interacts with GOLGB1. In terms of processing, phosphorylated in an ATM-dependent manner following DNA damage. Phosphorylated as cells enter mitosis and dephosphorylated as cells exit mitosis. In terms of tissue distribution, expressed in skin.

The protein localises to the cytoplasm. It localises to the nucleus. It is found in the nucleolus. The protein resides in the golgi apparatus. Its subcellular location is the cytoskeleton. The protein localises to the microtubule organizing center. It localises to the centrosome. It catalyses the reaction L-seryl-[protein] + ATP = O-phospho-L-seryl-[protein] + ADP + H(+). It carries out the reaction L-threonyl-[protein] + ATP = O-phospho-L-threonyl-[protein] + ADP + H(+). Its function is as follows. Serine/threonine-protein kinase involved in cell cycle regulation, response to stress and Golgi disassembly. Polo-like kinases act by binding and phosphorylating proteins that are already phosphorylated on a specific motif recognized by the POLO box domains. Phosphorylates ATF2, BCL2L1, CDC25A, CDC25C, CHEK2, HIF1A, JUN, p53/TP53, p73/TP73, PTEN, TOP2A and VRK1. Involved in cell cycle regulation: required for entry into S phase and cytokinesis. Phosphorylates BCL2L1, leading to regulate the G2 checkpoint and progression to cytokinesis during mitosis. Plays a key role in response to stress: rapidly activated upon stress stimulation, such as ionizing radiation, reactive oxygen species (ROS), hyperosmotic stress, UV irradiation and hypoxia. Involved in DNA damage response and G1/S transition checkpoint by phosphorylating CDC25A, p53/TP53 and p73/TP73. Phosphorylates p53/TP53 in response to reactive oxygen species (ROS), thereby promoting p53/TP53-mediated apoptosis. Phosphorylates CHEK2 in response to DNA damage, promoting the G2/M transition checkpoint. Phosphorylates the transcription factor p73/TP73 in response to DNA damage, leading to inhibit p73/TP73-mediated transcriptional activation and pro-apoptotic functions. Phosphorylates HIF1A and JUN is response to hypoxia. Phosphorylates ATF2 following hyperosmotic stress in corneal epithelium. Also involved in Golgi disassembly during the cell cycle: part of a MEK1/MAP2K1-dependent pathway that induces Golgi fragmentation during mitosis by mediating phosphorylation of VRK1. May participate in endomitotic cell cycle, a form of mitosis in which both karyokinesis and cytokinesis are interrupted and is a hallmark of megakaryocyte differentiation, via its interaction with CIB1. The protein is Serine/threonine-protein kinase PLK3 (Plk3) of Mus musculus (Mouse).